Reading from the N-terminus, the 265-residue chain is Apolipoprotein A-I (265 aa).

The first 20 residues, 1–20, serve as a signal peptide directing secretion; the sequence is METKAVVLTLAVLFLTGSQA. 2 tandem repeats follow at residues 69 to 90 and 91 to 112. Residues 69–265 are 10 X approximate tandem repeats; that stretch reads LKILDNWDTL…DEATKKLNSQ (197 aa). The stretch at 113 to 123 is one 3; half-length repeat; the sequence is KDLEELKQKVQ. A run of 5 repeats spans residues 124 to 145, 146 to 167, 168 to 189, 190 to 209, and 210 to 230. Met-195 is subject to Methionine sulfoxide. The stretch at 231–241 is one 9; half-length repeat; that stretch reads PALEDFRQGLM. Met-241 is subject to Methionine sulfoxide. Repeat unit 10 spans residues 242–265; it reads PVLEGFQKSVLAALDEATKKLNSQ.

This sequence belongs to the apolipoprotein A1/A4/E family. In terms of assembly, homodimer. Interacts with APOA1BP and CLU. Component of a sperm activating protein complex (SPAP), consisting of APOA1, an immunoglobulin heavy chain, an immunoglobulin light chain and albumin. Interacts with NDRG1. Interacts with SCGB3A2. Interacts with NAXE and YJEFN3. Post-translationally, glycosylated. Palmitoylated. In terms of processing, phosphorylation sites are present in the extracellular medium. In terms of tissue distribution, major protein of plasma HDL, also found in chylomicrons.

It localises to the secreted. Participates in the reverse transport of cholesterol from tissues to the liver for excretion by promoting cholesterol efflux from tissues and by acting as a cofactor for the lecithin cholesterol acyltransferase (LCAT). As part of the SPAP complex, activates spermatozoa motility. This Orycteropus afer (Aardvark) protein is Apolipoprotein A-I (APOA1).